The following is a 202-amino-acid chain: Oxopyrrolidines biosynthesis cluster protein O (202 aa).

Functionally, part of the gene cluster that mediates the biosynthesis of oxopyrrolidines, polyketide-amino acid hybrid compounds with feature structures of tetramic acid. Does not seem to play a role in oxopyrrolidines A and B biosynthesis. This chain is Oxopyrrolidines biosynthesis cluster protein O, found in Penicillium oxalicum (strain 114-2 / CGMCC 5302) (Penicillium decumbens).